The sequence spans 4239 residues: Tenellin synthetase (4239 aa).

One can recognise a Ketosynthase family 3 (KS3) domain in the interval 15–454 (SEPIAIIGSA…GTNAHAIIER (440 aa)). Active-site for beta-ketoacyl synthase activity residues include C189, H326, and H374. The interval 589-923 (VFTGQGAQWP…ANDAVAFSTA (335 aa)) is malonyl-CoA:ACP transacylase (MAT) domain. Residues 993–1135 (HELLGRRTPD…GRIAVQLGAK (143 aa)) are N-terminal hotdog fold. A dehydratase (DH) domain region spans residues 993-1310 (HELLGRRTPD…GFEVRAVGEP (318 aa)). Residues 993–1313 (HELLGRRTPD…VRAVGEPDAS (321 aa)) form the PKS/mFAS DH domain. H1025 serves as the catalytic Proton acceptor; for dehydratase activity. Positions 1158–1313 (LQQLDCEKLY…VRAVGEPDAS (156 aa)) are C-terminal hotdog fold. D1217 acts as the Proton donor; for dehydratase activity in catalysis. A methyltransferase (MT) domain region spans residues 1459–1652 (RLYTEDKGMH…FSGVDHIVHD (194 aa)). Residues 2209–2382 (TYLMVGAAGG…AASIIHVGHV (174 aa)) form a ketoreductase (KR) domain region. The Carrier 1 domain occupies 2502 to 2582 (EAAVAALKGF…QLSALAAKLA (81 aa)). O-(pantetheine 4'-phosphoryl)serine is present on S2542. Disordered regions lie at residues 2587–2629 (KKRA…EIAQ) and 2642–2712 (LEAS…FFTQ). Polar residues-rich tracts occupy residues 2648-2662 (GGSSTANLTTSSSVS) and 2670-2681 (ESTLQSSDNNGE). The span at 2682–2698 (STPSKSSNCNSDSGSDN) shows a compositional bias: low complexity. Positions 2723–3169 (REAPMSPAQS…SAQSVGDCVV (447 aa)) are condensation (C) domain. Residues 3203-3614 (CQQHSTKSAI…DGTLLCFGRI (412 aa)) form an adenylation (A) (KR) domain region. The interval 3728 to 3752 (EAAAATSPSNNNINNNTPSGGGGEK) is disordered. Low complexity predominate over residues 3729–3745 (AAAATSPSNNNINNNTP). The Carrier 2 domain maps to 3751–3835 (EKMTVRQGEL…GMARCVAEQR (85 aa)). S3795 carries the O-(pantetheine 4'-phosphoryl)serine modification. The tract at residues 3862-3892 (EKLQHSSASSSSSSSSSSSAGSSSTQRPRKT) is disordered. A compositionally biased stretch (low complexity) spans 3867–3885 (SSASSSSSSSSSSSAGSSS). Residues 3899–4145 (LTGATGFLGG…LDFGQVDKVV (247 aa)) form a reductase (RED) domain region.

In the C-terminal section; belongs to the NRP synthetase family.

Its pathway is secondary metabolite biosynthesis. Functionally, hybrid PKS-NRPS synthetase; part of the gene cluster that mediates the biosynthesis of tenellin-type 2-pyridones, iron-chelating compounds involved in iron stress tolerance, competition with the natural competitor fungus Metarhizium robertsii and insect hosts infection. TenS catalyzes the assembly of the polyketide-amino acid backbone. Because tenS lacks a designated enoylreductase (ER) domain, the required activity is provided the enoyl reductase tenC. Upon formation of the polyketide backbone on the thiotemplate, the triketide is transferred to the NRPS module and linked to tyrosine to produce the pyrrolidine-2-dione intermediates, including pretellinin A, 11-hydropretellenin A, 12-hydropretellenin A, 13-hydropretellenin A, 14-hydropretellenin A, 12-oxopretellenin A and prototellinin D. The pathway begins with the assembly of the polyketide-amino acid backbone by the hybrid PKS-NRPS tenS with the help of the enoyl reductase tenC. These enzymes catalyze the synthesis of the pyrrolidine-2-dione intermediates pretellinin A, 11-hydropretellenin A, 12-hydropretellenin A, 13-hydropretellenin A, 14-hydropretellenin A, 12-oxopretellenin A and prototellinin D. The cytochrome P450 monooxygenase tenA then catalyzes an oxidative ring expansion of pretenellin A and 14-hydropretellenin A to form the 2-pyridone core, leading to pretenellin B and pyridovericin, respectively. The cytochrome P450 monooxygenase tenB is then required for the selective N-hydroxylation of the 2-pyridone nitrogen of yield tellinin and 15-hydroxytellenin (15-HT), respectively. The UDP-glucosyltransferase GT1 and the methyltransferase MT1, located outside the tenS gene cluster, contribute to the stepwise glycosylation and methylation of 15-HT to obtain the glycoside pyridovericin-N-O-(4-O-methyl-beta-D-glucopyranoside) (PMGP). Additional related compounds such as 1-O-methyl-15-HT, (8Z)-1-O-methyl-15-HT, and O-methyltenellin A are also produced but the enzymes involved in their biosynthesis have still to be determined. The chain is Tenellin synthetase from Beauveria bassiana (White muscardine disease fungus).